Reading from the N-terminus, the 273-residue chain is MALRNFNPITPSLRELVQVDRTSLWKGRPLKSLTKGISKTGGRNNQGRITSWHRGGGHKKLYRIIDFKRNKIDISAVVERIEYDPNRTAFIALIKYEDGEYSYILAPQKLSVGDRVMSSQDADIKIGNCLPLKFIPVGTTLHNVEMKVGKGGQIARSAGTSVDLVGKDSGYAQIKLRSGEFRLVPLDCKATIGSISNPDRKNINLGKAGRNRWLGWRPHVRGVAMNPVDHPHGGGEGKTSGGRHPVTPWGFPTKGKKTRKNKRTSKFIVKKRK.

Residues 228–273 (VDHPHGGGEGKTSGGRHPVTPWGFPTKGKKTRKNKRTSKFIVKKRK) form a disordered region. Basic residues predominate over residues 254 to 273 (KGKKTRKNKRTSKFIVKKRK).

This sequence belongs to the universal ribosomal protein uL2 family. Part of the 50S ribosomal subunit. Forms a bridge to the 30S subunit in the 70S ribosome.

Functionally, one of the primary rRNA binding proteins. Required for association of the 30S and 50S subunits to form the 70S ribosome, for tRNA binding and peptide bond formation. It has been suggested to have peptidyltransferase activity; this is somewhat controversial. Makes several contacts with the 16S rRNA in the 70S ribosome. This chain is Large ribosomal subunit protein uL2, found in Rickettsia akari (strain Hartford).